A 95-amino-acid chain; its full sequence is MLHTLHRSPWLTDFAALLRLLSEGDELLLLQDGVTAAVDGNRYLESLRNAPIKVYALNEDLIARGLTGRISNDIISIDYTDFVRLTVKHSSQMAW.

It belongs to the DsrH/TusB family. In terms of assembly, heterohexamer, formed by a dimer of trimers. The hexameric TusBCD complex contains 2 copies each of TusB, TusC and TusD. The TusBCD complex interacts with TusE.

It is found in the cytoplasm. Functionally, part of a sulfur-relay system required for 2-thiolation of 5-methylaminomethyl-2-thiouridine (mnm(5)s(2)U) at tRNA wobble positions. The chain is Protein TusB from Escherichia coli O81 (strain ED1a).